Here is a 520-residue protein sequence, read N- to C-terminus: GMP synthase [glutamine-hydrolyzing] (520 aa).

Residues 9–202 (TILIIDFGSQ…VHRIVGVKPG (194 aa)) form the Glutamine amidotransferase type-1 domain. The Nucleophile role is filled by cysteine 86. Residues histidine 176 and glutamate 178 contribute to the active site. Residues 203–395 (WTMGAYREQA…LGLPDSFIGR (193 aa)) enclose the GMPS ATP-PPase domain. An ATP-binding site is contributed by 230–236 (SGGVDSS).

As to quaternary structure, homodimer.

It carries out the reaction XMP + L-glutamine + ATP + H2O = GMP + L-glutamate + AMP + diphosphate + 2 H(+). It functions in the pathway purine metabolism; GMP biosynthesis; GMP from XMP (L-Gln route): step 1/1. Catalyzes the synthesis of GMP from XMP. The polypeptide is GMP synthase [glutamine-hydrolyzing] (Brucella abortus (strain S19)).